We begin with the raw amino-acid sequence, 109 residues long: MRWGSVILAALFEIGWVMGLKHADSALEWICTAAAVVMSFYILVKAGEKLPVGTVYAVFTGLGTAGTVVCEIALFNEPANIAKLALIGVLLCGVIGLKLVTNEEKGEAS.

A run of 4 helical transmembrane segments spans residues 3–23, 26–46, 55–75, and 81–101; these read WGSV…LKHA, ALEW…LVKA, VYAV…IALF, and IAKL…KLVT.

Belongs to the drug/metabolite transporter (DMT) superfamily. Small multidrug resistance (SMR) (TC 2.A.7.1) family. YkkC/YkkD subfamily. The efflux pump is composed of GdnC and GdnD.

Its subcellular location is the cell membrane. In terms of biological role, probably involved in guanidinium transport. The sequence is that of Probable guanidinium efflux system subunit GdnC from Bacillus licheniformis (strain ATCC 14580 / DSM 13 / JCM 2505 / CCUG 7422 / NBRC 12200 / NCIMB 9375 / NCTC 10341 / NRRL NRS-1264 / Gibson 46).